The sequence spans 847 residues: Glucans biosynthesis glucosyltransferase H (847 aa).

At Met1–Arg138 the chain is on the cytoplasmic side. The helical transmembrane segment at Tyr139–Met156 threads the bilayer. Over Lys157–Gly193 the chain is Periplasmic. Residues Ile194–Phe216 form a helical membrane-spanning segment. Over Leu217–Arg511 the chain is Cytoplasmic. Residues Ala512–Ser534 traverse the membrane as a helical segment. Residues Thr535–Ala567 lie on the Periplasmic side of the membrane. The helical transmembrane segment at Ile568–Trp590 threads the bilayer. The Cytoplasmic segment spans residues Cys591–Arg602. Residues Val603–His625 form a helical membrane-spanning segment. Over Thr626–Arg679 the chain is Periplasmic. A helical membrane pass occupies residues Phe680–Ser702. Residues Arg703–Gly847 lie on the Cytoplasmic side of the membrane.

This sequence belongs to the glycosyltransferase 2 family. OpgH subfamily.

The protein resides in the cell inner membrane. It participates in glycan metabolism; osmoregulated periplasmic glucan (OPG) biosynthesis. In terms of biological role, involved in the biosynthesis of osmoregulated periplasmic glucans (OPGs). The sequence is that of Glucans biosynthesis glucosyltransferase H from Salmonella typhi.